A 1199-amino-acid chain; its full sequence is Metabotropic glutamate receptor 1 (1199 aa).

The signal sequence occupies residues 1 to 18 (MVRLLLIFFPMIFLEMSI). Residues 19–592 (LPRMPDRKVL…VRYLEWSDIE (574 aa)) are Extracellular-facing. Cysteines 67 and 109 form a disulfide. Tyrosine 74 is a binding site for L-glutamate. A glycan (N-linked (GlcNAc...) asparagine) is linked at asparagine 98. L-glutamate-binding positions include serine 165 and 186–188 (SAT). A glycan (N-linked (GlcNAc...) asparagine) is linked at asparagine 223. Position 236 (tyrosine 236) interacts with L-glutamate. Residues cysteine 289 and cysteine 291 are joined by a disulfide bond. Aspartate 318 contributes to the L-glutamate binding site. The cysteines at positions 378 and 394 are disulfide-linked. N-linked (GlcNAc...) asparagine glycosylation occurs at asparagine 397. Residue lysine 409 coordinates L-glutamate. A disulfide bridge links cysteine 432 with cysteine 439. Residue asparagine 515 is glycosylated (N-linked (GlcNAc...) asparagine). Residues 593-615 (SIIAIAFSCLGILVTLFVTLIFV) form a helical membrane-spanning segment. The Cytoplasmic segment spans residues 616 to 629 (LYRDTPVVKSSSRE). The chain crosses the membrane as a helical span at residues 630–650 (LCYIILAGIFLGYVCPFTLIA). Residues 651–658 (KPTTTSCY) are Extracellular-facing. Cysteine 657 and cysteine 746 are joined by a disulfide. A helical transmembrane segment spans residues 659-680 (LQRLLVGLSSAMCYSALVTKTN). The Cytoplasmic segment spans residues 681–703 (RIARILAGSKKKICTRKPRFMSA). The helical transmembrane segment at 704–727 (WAQVIIASILISVQLTLVVTLIIM) threads the bilayer. Topologically, residues 728 to 750 (EPPMPILSYPSIKEVYLICNTSN) are extracellular. Residues 751–772 (LGVVAPVGYNGLLIMSCTYYAF) traverse the membrane as a helical segment. The Cytoplasmic segment spans residues 773–785 (KTRNVPANFNEAK). Residues 786–807 (YIAFTMYTTCIIWLAFVPIYFG) form a helical membrane-spanning segment. Topologically, residues 808 to 815 (SNYKIITT) are extracellular. Residues 816–840 (CFAVSLSVTVALGCMFTPKMYIIIA) form a helical membrane-spanning segment. Topologically, residues 841–1199 (KPERNVRSAF…RDYKQSSSTL (359 aa)) are cytoplasmic. At serine 853 the chain carries Phosphoserine. Threonine 871 is subject to Phosphothreonine. 3 disordered regions span residues 882–905 (GAGNANSNGKSVSWSEPGGRQAPK), 959–1036 (EEDN…QPKS), and 1056–1081 (HAVLAGPGTPGNSLRSLYPPPPPPQH). The segment covering 885–895 (NANSNGKSVSW) has biased composition (polar residues). Phosphoserine occurs at positions 894 and 969. The span at 1012–1033 (GLPPPLPQQQPQQPPPQQPPQQ) shows a compositional bias: pro residues. Serine 1098 carries the post-translational modification Phosphoserine. Residues 1120–1177 (EREGNTEEDELEEEEDLPTASKLTPEDSPALTPPSPFRDSVASGSSVPSSPVSESVLC) form a disordered region. A compositionally biased stretch (acidic residues) spans 1125–1136 (TEEDELEEEEDL). Serine 1147 carries the post-translational modification Phosphoserine. Threonine 1151 bears the Phosphothreonine mark. Residue serine 1154 is modified to Phosphoserine. The span at 1159-1175 (SVASGSSVPSSPVSESV) shows a compositional bias: low complexity.

Belongs to the G-protein coupled receptor 3 family. In terms of assembly, homodimer; disulfide-linked. The PPXXF motif binds HOMER1, HOMER2 and HOMER3. Interacts with TAMALIN. Interacts with RYR1, RYR2, ITPR1, SHANK1 and SHANK3. Interacts with SIAH1. In terms of tissue distribution, predominantly expressed in cerebellar Purkinje cells, CA2-CA3 pyramidal cells of the hippocampus, and mitral and tufted cells of the olfactory bulb.

The protein localises to the cell membrane. The protein resides in the postsynaptic cell membrane. It localises to the cell projection. It is found in the dendrite. Its function is as follows. G-protein coupled receptor for glutamate. Ligand binding causes a conformation change that triggers signaling via guanine nucleotide-binding proteins (G proteins) and modulates the activity of down-stream effectors. Signaling activates a phosphatidylinositol-calcium second messenger system. May participate in the central action of glutamate in the CNS, such as long-term potentiation in the hippocampus and long-term depression in the cerebellum. May function in the light response in the retina. Induces GRID1 and GRID2 cation-channel activation via GNAQ-PLC-PKC pathway in dopaminergic neurons and cerebellar Purkinje cell, respectively. The chain is Metabotropic glutamate receptor 1 (Grm1) from Rattus norvegicus (Rat).